The primary structure comprises 251 residues: Probable transcriptional regulatory protein Arth_2304 (251 aa).

Belongs to the TACO1 family.

The protein localises to the cytoplasm. This is Probable transcriptional regulatory protein Arth_2304 from Arthrobacter sp. (strain FB24).